The primary structure comprises 657 residues: Glycogen debranching enzyme (657 aa).

Asp-336 (nucleophile) is an active-site residue. Catalysis depends on Glu-371, which acts as the Proton donor. Residues 460–479 (ANGEENRDGTNNNYSNNHGK) are disordered.

Belongs to the glycosyl hydrolase 13 family.

It catalyses the reaction Hydrolysis of (1-&gt;6)-alpha-D-glucosidic linkages to branches with degrees of polymerization of three or four glucose residues in limit dextrin.. It functions in the pathway glycan degradation; glycogen degradation. Its function is as follows. Removes maltotriose and maltotetraose chains that are attached by 1,6-alpha-linkage to the limit dextrin main chain, generating a debranched limit dextrin. The protein is Glycogen debranching enzyme of Escherichia coli O127:H6 (strain E2348/69 / EPEC).